Consider the following 119-residue polypeptide: Large ribosomal subunit protein bL20 (119 aa).

This sequence belongs to the bacterial ribosomal protein bL20 family.

In terms of biological role, binds directly to 23S ribosomal RNA and is necessary for the in vitro assembly process of the 50S ribosomal subunit. It is not involved in the protein synthesizing functions of that subunit. This is Large ribosomal subunit protein bL20 from Clostridium perfringens (strain ATCC 13124 / DSM 756 / JCM 1290 / NCIMB 6125 / NCTC 8237 / Type A).